The sequence spans 100 residues: Small ribosomal subunit protein uS14c (100 aa).

Belongs to the universal ribosomal protein uS14 family. Part of the 30S ribosomal subunit.

It is found in the plastid. The protein localises to the chloroplast. Functionally, binds 16S rRNA, required for the assembly of 30S particles. The protein is Small ribosomal subunit protein uS14c of Aethionema cordifolium (Lebanon stonecress).